The primary structure comprises 239 residues: Alpha-acetolactate decarboxylase (239 aa).

The protein belongs to the alpha-acetolactate decarboxylase family.

The enzyme catalyses (2S)-2-acetolactate + H(+) = (R)-acetoin + CO2. It participates in polyol metabolism; (R,R)-butane-2,3-diol biosynthesis; (R,R)-butane-2,3-diol from pyruvate: step 2/3. With respect to regulation, the enzyme is active only in the presence of branched-chain amino acids. Valine results in much higher activation than leucine or isoleucine. In terms of biological role, converts acetolactate into acetoin. Regulates leucine and valine biosynthesis by diverting the flux of alpha-acetolactate towards acetoin when the branched-chain amino acids are present in high concentration. This Streptococcus thermophilus protein is Alpha-acetolactate decarboxylase (aldC).